The chain runs to 470 residues: Putative multidrug resistance protein MdtD (470 aa).

Residues 1-11 (MTELPDNTRWQ) lie on the Periplasmic side of the membrane. A helical transmembrane segment spans residues 12-32 (LWIVAFGFFMQSLDTTIVNTA). Residues 33–48 (LPSMAKSLGESPLHMH) are Cytoplasmic-facing. The helical transmembrane segment at 49–69 (MVVVSYVLTVAVMLPASGWLA) threads the bilayer. Residues 70 to 76 (DKIGVRN) lie on the Periplasmic side of the membrane. The chain crosses the membrane as a helical span at residues 77 to 97 (IFFAAIVLFTLGSLFCALSGT). Over 98 to 101 (LNQL) the chain is Cytoplasmic. The chain crosses the membrane as a helical span at residues 102–124 (VLARVLQGVGGAMMVPVGRLTVM). At 125–137 (KIVPRAQYMAAMT) the chain is on the periplasmic side. A helical transmembrane segment spans residues 138-158 (FVTLPGQIGPLLGPALGGVLV). Residues 159–164 (EYASWH) are Cytoplasmic-facing. The helical transmembrane segment at 165–185 (WIFLINIPVGIVGAMATFMLM) threads the bilayer. At 186 to 196 (PNYTIETRRFD) the chain is on the periplasmic side. A helical transmembrane segment spans residues 197–217 (LPGFLLLAIGMAVLTLALDGS). The Cytoplasmic portion of the chain corresponds to 218–224 (KSMGISP). Residues 225–245 (WTLAGLAAGGAAAILLYLFHA) traverse the membrane as a helical segment. The Periplasmic segment spans residues 246–262 (KKSSGALFSLRLFRTPT). Residues 263–283 (FSLGLLGSFAGRIGSGMLPFM) traverse the membrane as a helical segment. Over 284–285 (TP) the chain is Cytoplasmic. The chain crosses the membrane as a helical span at residues 286–306 (VFLQIGLGFSPFHAGLMMIPM). Topologically, residues 307–341 (VLGSMGMKRIVVQIVNRFGYRRVLVATTLGLALVS) are periplasmic. Residues 342–362 (LLFMSVALLGWYYLLPLVLLL) traverse the membrane as a helical segment. Residues 363-395 (QGMVNSARFSSMNTLTLKDLPDTLASSGNSLLS) lie on the Cytoplasmic side of the membrane. The chain crosses the membrane as a helical span at residues 396–416 (MIMQLSMSIGVTIAGMLLGMF). Residues 417–430 (GQQHIGIDSSATHH) lie on the Periplasmic side of the membrane. Residues 431–451 (VFMYTWLCMAVIIALPAIIFA) form a helical membrane-spanning segment. Residues 452-470 (RVPNDTQQNMVISRRKRSL) lie on the Cytoplasmic side of the membrane.

It belongs to the major facilitator superfamily. TCR/Tet family.

The protein localises to the cell inner membrane. This Salmonella paratyphi A (strain ATCC 9150 / SARB42) protein is Putative multidrug resistance protein MdtD.